Reading from the N-terminus, the 244-residue chain is Triosephosphate isomerase (244 aa).

Residue 9-11 (NWK) participates in substrate binding. The active-site Electrophile is His93. Glu160 functions as the Proton acceptor in the catalytic mechanism. Substrate contacts are provided by Gly166 and Ser206.

The protein belongs to the triosephosphate isomerase family. In terms of assembly, homodimer.

It localises to the cytoplasm. It catalyses the reaction D-glyceraldehyde 3-phosphate = dihydroxyacetone phosphate. It participates in carbohydrate biosynthesis; gluconeogenesis. The protein operates within carbohydrate degradation; glycolysis; D-glyceraldehyde 3-phosphate from glycerone phosphate: step 1/1. In terms of biological role, involved in the gluconeogenesis. Catalyzes stereospecifically the conversion of dihydroxyacetone phosphate (DHAP) to D-glyceraldehyde-3-phosphate (G3P). The chain is Triosephosphate isomerase from Mycoplasma pneumoniae (strain ATCC 29342 / M129 / Subtype 1) (Mycoplasmoides pneumoniae).